The following is a 580-amino-acid chain: 2-succinyl-5-enolpyruvyl-6-hydroxy-3-cyclohexene-1-carboxylate synthase (580 aa).

Belongs to the TPP enzyme family. MenD subfamily. Homodimer. It depends on Mg(2+) as a cofactor. Mn(2+) is required as a cofactor. The cofactor is thiamine diphosphate.

It carries out the reaction isochorismate + 2-oxoglutarate + H(+) = 5-enolpyruvoyl-6-hydroxy-2-succinyl-cyclohex-3-ene-1-carboxylate + CO2. Its pathway is quinol/quinone metabolism; 1,4-dihydroxy-2-naphthoate biosynthesis; 1,4-dihydroxy-2-naphthoate from chorismate: step 2/7. It functions in the pathway quinol/quinone metabolism; menaquinone biosynthesis. In terms of biological role, catalyzes the thiamine diphosphate-dependent decarboxylation of 2-oxoglutarate and the subsequent addition of the resulting succinic semialdehyde-thiamine pyrophosphate anion to isochorismate to yield 2-succinyl-5-enolpyruvyl-6-hydroxy-3-cyclohexene-1-carboxylate (SEPHCHC). This Listeria innocua serovar 6a (strain ATCC BAA-680 / CLIP 11262) protein is 2-succinyl-5-enolpyruvyl-6-hydroxy-3-cyclohexene-1-carboxylate synthase.